The sequence spans 157 residues: Aspartate carbamoyltransferase regulatory chain (157 aa).

Positions 108, 113, 138, and 141 each coordinate Zn(2+).

It belongs to the PyrI family. As to quaternary structure, contains catalytic and regulatory chains. Zn(2+) serves as cofactor.

Functionally, involved in allosteric regulation of aspartate carbamoyltransferase. The polypeptide is Aspartate carbamoyltransferase regulatory chain (Korarchaeum cryptofilum (strain OPF8)).